A 171-amino-acid polypeptide reads, in one-letter code: Adenine phosphoribosyltransferase (171 aa).

Belongs to the purine/pyrimidine phosphoribosyltransferase family. In terms of assembly, homodimer.

It is found in the cytoplasm. The catalysed reaction is AMP + diphosphate = 5-phospho-alpha-D-ribose 1-diphosphate + adenine. It functions in the pathway purine metabolism; AMP biosynthesis via salvage pathway; AMP from adenine: step 1/1. Catalyzes a salvage reaction resulting in the formation of AMP, that is energically less costly than de novo synthesis. The protein is Adenine phosphoribosyltransferase of Nitrosococcus oceani (strain ATCC 19707 / BCRC 17464 / JCM 30415 / NCIMB 11848 / C-107).